The chain runs to 154 residues: Xanthine-guanine phosphoribosyltransferase (154 aa).

Residues 37-38 (RG), Arg69, and 88-96 (EDLVDSGDT) each bind 5-phospho-alpha-D-ribose 1-diphosphate. GMP is bound at residue Arg69. Asp89 serves as a coordination point for Mg(2+). Guanine is bound by residues Asp92 and Ile135. Xanthine is bound by residues Asp92 and Ile135. Residues 92–96 (DSGDT) and 134–135 (WI) each bind GMP.

It belongs to the purine/pyrimidine phosphoribosyltransferase family. XGPT subfamily. Homotetramer. The cofactor is Mg(2+).

The protein resides in the cell inner membrane. It catalyses the reaction GMP + diphosphate = guanine + 5-phospho-alpha-D-ribose 1-diphosphate. It carries out the reaction XMP + diphosphate = xanthine + 5-phospho-alpha-D-ribose 1-diphosphate. The catalysed reaction is IMP + diphosphate = hypoxanthine + 5-phospho-alpha-D-ribose 1-diphosphate. Its pathway is purine metabolism; GMP biosynthesis via salvage pathway; GMP from guanine: step 1/1. The protein operates within purine metabolism; XMP biosynthesis via salvage pathway; XMP from xanthine: step 1/1. Purine salvage pathway enzyme that catalyzes the transfer of the ribosyl-5-phosphate group from 5-phospho-alpha-D-ribose 1-diphosphate (PRPP) to the N9 position of the 6-oxopurines guanine and xanthine to form the corresponding ribonucleotides GMP (guanosine 5'-monophosphate) and XMP (xanthosine 5'-monophosphate), with the release of PPi. To a lesser extent, also acts on hypoxanthine. The protein is Xanthine-guanine phosphoribosyltransferase of Vibrio parahaemolyticus serotype O3:K6 (strain RIMD 2210633).